Reading from the N-terminus, the 501-residue chain is Raftlin-2 (501 aa).

Disordered stretches follow at residues 1–20 (MGCGLRKLEDPDDSSPGKIF) and 196–239 (SWNE…RKGE). Gly2 is lipidated: N-myristoyl glycine. The S-palmitoyl cysteine moiety is linked to residue Cys3. A compositionally biased stretch (polar residues) spans 220 to 233 (GQYQMEQNGSPTSS). Ser405 is subject to Phosphoserine. The interval 407-449 (AQTPDKKASRHIKGEDKNKATSRSIGLDTTSSQPAESRHLPEE) is disordered. Residue Thr409 is modified to Phosphothreonine. A compositionally biased stretch (basic and acidic residues) spans 410-425 (PDKKASRHIKGEDKNK). Residues 427 to 441 (TSRSIGLDTTSSQPA) show a composition bias toward polar residues. Ser430 carries the phosphoserine modification.

It belongs to the raftlin family.

Its subcellular location is the cell membrane. In terms of biological role, upon bacterial lipopolysaccharide stimulation, mediates clathrin-dependent internalization of TLR4 in dendritic cells, resulting in activation of TICAM1-mediated signaling and subsequent IFNB1 production. May regulate B-cell antigen receptor-mediated signaling. The sequence is that of Raftlin-2 (RFTN2) from Homo sapiens (Human).